Consider the following 269-residue polypeptide: Flagellar brake protein YcgR (269 aa).

Positions 134 to 254 (QRRNFYRVTT…SRLLIQRYIT (121 aa)) constitute a PilZ domain.

This sequence belongs to the YcgR family. In terms of assembly, monomer. Interacts with the flagellar basal bodies.

Its subcellular location is the bacterial flagellum basal body. In terms of biological role, acts as a flagellar brake, regulating swimming and swarming in a bis-(3'-5') cyclic diguanylic acid (c-di-GMP)-dependent manner. Binds 1 c-di-GMP dimer per subunit. Increasing levels of c-di-GMP lead to decreased motility. In Nitrosomonas eutropha (strain DSM 101675 / C91 / Nm57), this protein is Flagellar brake protein YcgR.